We begin with the raw amino-acid sequence, 346 residues long: Annexin A1 (346 aa).

An N-acetylalanine modification is found at Ala2. Ser5 carries the phosphoserine; by TRPM7 modification. Gln19 participates in a covalent cross-link: Isoglutamyl lysine isopeptide (Gln-Lys) (interchain with K-?). Position 21 is a phosphotyrosine; by EGFR (Tyr21). Ser27 carries the post-translational modification Phosphoserine; by PKC. 2 positions are modified to phosphoserine: Ser34 and Ser37. Phosphothreonine is present on Thr41. Annexin repeat units follow at residues 42–113 (FNPS…ALLK), 114–185 (TPAQ…SLAK), 197–269 (DLAD…AIVK), and 273–344 (SKPA…ALCG). N6-acetyllysine is present on Lys58. Ca(2+) is bound by residues Gly59, Val60, Glu62, Lys97, Leu100, Glu105, Met127, Gly129, Gly131, Thr132, and Glu134. Thr136 carries the post-translational modification Phosphothreonine. Ca(2+)-binding residues include Asp171, Gly210, and Arg213. A Glycyl lysine isopeptide (Lys-Gly) (interchain with G-Cter in SUMO1); alternate cross-link involves residue Lys214. A Glycyl lysine isopeptide (Lys-Gly) (interchain with G-Cter in SUMO2); alternate cross-link involves residue Lys214. A Ca(2+)-binding site is contributed by Gly215. An N6-acetyllysine modification is found at Lys239. Ca(2+) is bound by residues Asp253, Glu255, and Leu256. Residue Lys257 forms a Glycyl lysine isopeptide (Lys-Gly) (interchain with G-Cter in SUMO1) linkage. Glu261, Met286, Gly288, and Gly290 together coordinate Ca(2+). N6-acetyllysine is present on Lys312. Cys324 and Cys343 form a disulfide bridge. 3 residues coordinate Ca(2+): Leu328, Glu330, and Thr331. A Glycyl lysine isopeptide (Lys-Gly) (interchain with G-Cter in SUMO1) cross-link involves residue Lys332. Glu336 lines the Ca(2+) pocket.

It belongs to the annexin family. As to quaternary structure, homodimer; non-covalently linked. Homodimer; linked by transglutamylation. Homodimers linked by transglutamylation are observed in placenta, but not in other tissues. Interacts with S100A11. Heterotetramer, formed by two molecules each of S100A11 and ANXA1. Interacts with DYSF. Interacts with EGFR. Post-translationally, phosphorylated by protein kinase C, EGFR and TRPM7. Phosphorylated in response to EGF treatment. Sumoylated. In terms of processing, proteolytically cleaved by cathepsin CTSG to release the active N-terminal peptide Ac2-26.

The protein resides in the nucleus. It localises to the cytoplasm. Its subcellular location is the cell projection. It is found in the cilium. The protein localises to the basolateral cell membrane. The protein resides in the lateral cell membrane. It localises to the cell membrane. Its subcellular location is the apical cell membrane. It is found in the membrane. The protein localises to the early endosome. The protein resides in the cytoplasmic vesicle membrane. It localises to the endosome membrane. Its subcellular location is the secreted. It is found in the extracellular space. The protein localises to the extracellular exosome. The protein resides in the cytoplasmic vesicle. It localises to the secretory vesicle lumen. Its subcellular location is the phagocytic cup. Plays important roles in the innate immune response as effector of glucocorticoid-mediated responses and regulator of the inflammatory process. Has anti-inflammatory activity. Plays a role in glucocorticoid-mediated down-regulation of the early phase of the inflammatory response. Contributes to the adaptive immune response by enhancing signaling cascades that are triggered by T-cell activation, regulates differentiation and proliferation of activated T-cells. Promotes the differentiation of T-cells into Th1 cells and negatively regulates differentiation into Th2 cells. Has no effect on unstimulated T-cells. Negatively regulates hormone exocytosis via activation of the formyl peptide receptors and reorganization of the actin cytoskeleton. Has high affinity for Ca(2+) and can bind up to eight Ca(2+) ions. Displays Ca(2+)-dependent binding to phospholipid membranes. Plays a role in the formation of phagocytic cups and phagosomes. Plays a role in phagocytosis by mediating the Ca(2+)-dependent interaction between phagosomes and the actin cytoskeleton. Its function is as follows. Functions at least in part by activating the formyl peptide receptors and downstream signaling cascades. Promotes chemotaxis of granulocytes and monocytes via activation of the formyl peptide receptors. Promotes rearrangement of the actin cytoskeleton, cell polarization and cell migration. Promotes resolution of inflammation and wound healing. Acts via neutrophil N-formyl peptide receptors to enhance the release of CXCL2. The protein is Annexin A1 (ANXA1) of Pan troglodytes (Chimpanzee).